Reading from the N-terminus, the 481-residue chain is Sucrose phosphorylase (481 aa).

Sucrose-binding positions include Asp-49, His-87, Arg-191 to Asp-193, Glu-234, His-291 to Asp-292, Asp-335 to Gln-338, and Arg-392. Residue Asp-193 is the Nucleophile of the active site. Glu-234 serves as the catalytic Proton donor.

This sequence belongs to the glycosyl hydrolase 13 family. Sucrose phosphorylase subfamily.

It localises to the cytoplasm. It catalyses the reaction sucrose + phosphate = D-fructose + alpha-D-glucose 1-phosphate. Intracellular catabolism of sucrose. Being intracellular, probably not involved in synthesis of extracellular polysaccharides. The protein is Sucrose phosphorylase of Streptococcus mutans serotype c (strain ATCC 700610 / UA159).